The following is a 319-amino-acid chain: Ornithine carbamoyltransferase (319 aa).

Residues 55 to 58 (STRT), Gln82, Arg106, and 133 to 136 (HPCQ) contribute to the carbamoyl phosphate site. L-ornithine contacts are provided by residues Asn171, Asp234, and 238–239 (SM). Residues 274–275 (CL) and Arg302 each bind carbamoyl phosphate.

This sequence belongs to the aspartate/ornithine carbamoyltransferase superfamily. OTCase family.

Its subcellular location is the cytoplasm. It catalyses the reaction carbamoyl phosphate + L-ornithine = L-citrulline + phosphate + H(+). Its pathway is amino-acid biosynthesis; L-arginine biosynthesis; L-arginine from L-ornithine and carbamoyl phosphate: step 1/3. In terms of biological role, reversibly catalyzes the transfer of the carbamoyl group from carbamoyl phosphate (CP) to the N(epsilon) atom of ornithine (ORN) to produce L-citrulline. This Corynebacterium diphtheriae (strain ATCC 700971 / NCTC 13129 / Biotype gravis) protein is Ornithine carbamoyltransferase.